A 419-amino-acid chain; its full sequence is Tyrosine--tRNA ligase 2 (419 aa).

Y34 provides a ligand contact to L-tyrosine. The 'HIGH' region motif lies at 39-48 (PTGDSMHIGH). Residues Y168 and Q172 each contribute to the L-tyrosine site. Positions 230-234 (KFGKS) match the 'KMSKS' region motif. K233 contributes to the ATP binding site. The region spanning 352 to 418 (KNIVEWLVDL…GKKNYSLVKL (67 aa)) is the S4 RNA-binding domain.

Belongs to the class-I aminoacyl-tRNA synthetase family. TyrS type 1 subfamily. As to quaternary structure, homodimer.

The protein localises to the cytoplasm. The catalysed reaction is tRNA(Tyr) + L-tyrosine + ATP = L-tyrosyl-tRNA(Tyr) + AMP + diphosphate + H(+). In terms of biological role, catalyzes the attachment of tyrosine to tRNA(Tyr) in a two-step reaction: tyrosine is first activated by ATP to form Tyr-AMP and then transferred to the acceptor end of tRNA(Tyr). The sequence is that of Tyrosine--tRNA ligase 2 from Bacillus cereus (strain ZK / E33L).